A 131-amino-acid chain; its full sequence is MSMSDPIADMLTRIRNAQLSEKTSVVMPASKLKAAIAQVLKDEGYVEDFIVHEAGGKSILDISLKYYAGRPVIERIERVSRPGLRIYKGSNKLPNVMNGLGVAIVSTSKGVMTERKARANGVGGEVLCIVA.

Belongs to the universal ribosomal protein uS8 family. In terms of assembly, part of the 30S ribosomal subunit. Contacts proteins S5 and S12.

Its function is as follows. One of the primary rRNA binding proteins, it binds directly to 16S rRNA central domain where it helps coordinate assembly of the platform of the 30S subunit. The chain is Small ribosomal subunit protein uS8 from Nitrosospira multiformis (strain ATCC 25196 / NCIMB 11849 / C 71).